Reading from the N-terminus, the 449-residue chain is Guanine/hypoxanthine permease GhxP (449 aa).

At Met1–Val25 the chain is on the cytoplasmic side. Residues Arg26–Met49 traverse the membrane as a helical segment. The Periplasmic portion of the chain corresponds to Leu50–Ala59. Residues Val60–Trp78 form a helical membrane-spanning segment. Over Ala79 to Asn80 the chain is Cytoplasmic. A discontinuously helical membrane pass occupies residues Leu81–Phe97. Residues Ser98 to Val109 are Periplasmic-facing. Residues Ala110–Ile129 form a helical membrane-spanning segment. The Cytoplasmic portion of the chain corresponds to Arg130–Val141. Residues Ala142–Gly162 traverse the membrane as a helical segment. Over Leu163–Ala180 the chain is Periplasmic. The chain crosses the membrane as a helical span at residues Thr181–Glu198. Residues Lys199–Val202 are Cytoplasmic-facing. The chain crosses the membrane as a helical span at residues Pro203–Pro222. Over Asn223 to Asn254 the chain is Periplasmic. A helical membrane pass occupies residues Pro255–Ala283. The Cytoplasmic segment spans residues Asn284–Gly296. Residues Lys297–Val312 traverse the membrane as a helical segment. Topologically, residues Gly313–Ala314 are periplasmic. The chain crosses the membrane as a discontinuously helical span at residues Ala315–Gly330. At Gly331 to Gly334 the chain is on the cytoplasmic side. The helical transmembrane segment at Leu335–Phe349 threads the bilayer. Over Leu350 to Tyr360 the chain is Periplasmic. The helical transmembrane segment at Ala361 to Ile380 threads the bilayer. At Asp381–Phe385 the chain is on the cytoplasmic side. An intramembrane region (discontinuously helical) is located at residues Val386–Val421. The Cytoplasmic portion of the chain corresponds to Ser422–Ile449.

It belongs to the nucleobase:cation symporter-2 (NCS2) (TC 2.A.40) family. Azg-like subfamily.

The protein resides in the cell inner membrane. In terms of biological role, high-affinity transporter for guanine and hypoxanthine. The protein is Guanine/hypoxanthine permease GhxP (ghxP) of Escherichia coli O157:H7.